Reading from the N-terminus, the 271-residue chain is 2,3,4,5-tetrahydropyridine-2,6-dicarboxylate N-succinyltransferase (271 aa).

Residues Arg-103 and Asp-140 each contribute to the substrate site.

Belongs to the transferase hexapeptide repeat family. In terms of assembly, homotrimer.

The protein localises to the cytoplasm. The catalysed reaction is (S)-2,3,4,5-tetrahydrodipicolinate + succinyl-CoA + H2O = (S)-2-succinylamino-6-oxoheptanedioate + CoA. It participates in amino-acid biosynthesis; L-lysine biosynthesis via DAP pathway; LL-2,6-diaminopimelate from (S)-tetrahydrodipicolinate (succinylase route): step 1/3. This is 2,3,4,5-tetrahydropyridine-2,6-dicarboxylate N-succinyltransferase from Methylococcus capsulatus (strain ATCC 33009 / NCIMB 11132 / Bath).